The following is a 156-amino-acid chain: Hexachlorocyclohexane dehydrochlorinase 2 (156 aa).

Asp25 is an active-site residue. The active-site Proton acceptor is the His73.

The protein belongs to the HCH dehydrochlorinase family. As to quaternary structure, homotrimer.

It localises to the periplasm. It carries out the reaction gamma-hexachlorocyclohexane = (3R,4S,5S,6R)-pentachlorocyclohexene + chloride + H(+). It catalyses the reaction (3R,4S,5S,6R)-pentachlorocyclohexene = (3R,6R)-1,3,4,6-tetrachlorocyclohexa-1,4-diene + chloride + H(+). It functions in the pathway xenobiotic degradation; hexachlorocyclohexane degradation. Its function is as follows. Catalyzes the conversion of the important environmental pollutant gamma-hexachlorocyclohexane (gamma-HCH or lindane) to 1,3,4,6-tetrachloro-1,4-cyclohexadiene (1,4-TCDN) via gamma-pentachlorocyclohexene (gamma-PCCH). Proceeds by two successive 1,2-anti conformationally dependent dehydrochlorinations. Also shows activity with alpha- and delta-HCH, giving alpha- and delta-PCCH respectively, but not with the beta isomer. In Sphingobium indicum (strain DSM 16412 / CCM 7286 / MTCC 6364 / B90A), this protein is Hexachlorocyclohexane dehydrochlorinase 2.